The primary structure comprises 338 residues: RNA 3'-terminal phosphate cyclase (338 aa).

ATP contacts are provided by residues Gln-103 and 283-287; that span reads YLADQ. His-308 acts as the Tele-AMP-histidine intermediate in catalysis.

This sequence belongs to the RNA 3'-terminal cyclase family. Type 1 subfamily.

The protein resides in the cytoplasm. It carries out the reaction a 3'-end 3'-phospho-ribonucleotide-RNA + ATP = a 3'-end 2',3'-cyclophospho-ribonucleotide-RNA + AMP + diphosphate. Its function is as follows. Catalyzes the conversion of 3'-phosphate to a 2',3'-cyclic phosphodiester at the end of RNA. The mechanism of action of the enzyme occurs in 3 steps: (A) adenylation of the enzyme by ATP; (B) transfer of adenylate to an RNA-N3'P to produce RNA-N3'PP5'A; (C) and attack of the adjacent 2'-hydroxyl on the 3'-phosphorus in the diester linkage to produce the cyclic end product. The biological role of this enzyme is unknown but it is likely to function in some aspects of cellular RNA processing. In Escherichia coli O139:H28 (strain E24377A / ETEC), this protein is RNA 3'-terminal phosphate cyclase.